Here is a 156-residue protein sequence, read N- to C-terminus: ATP synthase subunit b (156 aa).

The helical transmembrane segment at 3-23 (INFTLLAQALAFAGLIWIIAT) threads the bilayer.

The protein belongs to the ATPase B chain family. As to quaternary structure, F-type ATPases have 2 components, F(1) - the catalytic core - and F(0) - the membrane proton channel. F(1) has five subunits: alpha(3), beta(3), gamma(1), delta(1), epsilon(1). F(0) has three main subunits: a(1), b(2) and c(10-14). The alpha and beta chains form an alternating ring which encloses part of the gamma chain. F(1) is attached to F(0) by a central stalk formed by the gamma and epsilon chains, while a peripheral stalk is formed by the delta and b chains.

It is found in the cell membrane. Its function is as follows. F(1)F(0) ATP synthase produces ATP from ADP in the presence of a proton or sodium gradient. F-type ATPases consist of two structural domains, F(1) containing the extramembraneous catalytic core and F(0) containing the membrane proton channel, linked together by a central stalk and a peripheral stalk. During catalysis, ATP synthesis in the catalytic domain of F(1) is coupled via a rotary mechanism of the central stalk subunits to proton translocation. Component of the F(0) channel, it forms part of the peripheral stalk, linking F(1) to F(0). The chain is ATP synthase subunit b from Stenotrophomonas maltophilia (strain K279a).